The primary structure comprises 507 residues: MAVKKNKNVPKQEDPLVQKDEISSIHARIKIFETPFATQVLNPKVSEFCANCLRGPAPGEKLLRCGGCNFSMYCSKECQATAWLVHKPECKRLKASFPNLPLTEVLFLSKVIDRIQFLEKNGDKLGIEAERKFSSLVDHKVDIRDDEEKMAHFEKIFEKMGAFRGEEMIEKGEFFDVFCKATINSHSIHTNAGNEVGMALDLGVSKYNHSCRPTCSMVFDGYRVCLRPLVPGVDAENTEEAFISYIDVGRSKYIRRRDLNSRWYFNCECTRCMDPEDDALTAIRCANPACDAPILTSETEEPMNIACEKCKTIVEEDTVKAAQEYMKTLPASFDPKCPAEIEALPGKLKELLAKAEQILHPSNVYVARLRTALFHVTGTLTMDNLSSMHTQIYNNYKMCFPKADRHVGFQLLHIVKALIEKDERDEAMPYAFDAMNIFEVCFGLDHPYYLQTLALWTYLEKKIPKSTEELVQLTNFSDNRPIDIVSLLKRANMLPPPPYAAGTPGVA.

Zn(2+) is bound by residues cysteine 49, cysteine 52, cysteine 65, cysteine 68, cysteine 74, cysteine 78, histidine 86, and cysteine 90. The segment at 49–90 (CANCLRGPAPGEKLLRCGGCNFSMYCSKECQATAWLVHKPEC) adopts an MYND-type zinc-finger fold.

This sequence belongs to the class V-like SAM-binding methyltransferase superfamily. Histone-lysine methyltransferase family. As to expression, expressed in pharyngeal and body wall muscles.

It catalyses the reaction L-lysyl(36)-[histone H3] + 2 S-adenosyl-L-methionine = N(6),N(6)-dimethyl-L-lysyl(36)-[histone H3] + 2 S-adenosyl-L-homocysteine + 2 H(+). In terms of biological role, histone methyltransferase. Specifically methylates 'Lys-36' of histone H3, inducing di-methylation. Plays a role in modulating lifespan and oxidative stress resistance, in a manner dependent upon daf-16/Forkhead box protein O and the Insulin/IGF-1-like signaling (IIS) mediated pathway. Represses transcription of daf-16 isoform a, perhaps by methylating histone H3 at the daf-16 promoter, which in turn leads to recruitment of histone deacetylases and thus modulation of expression. The protein is Histone-lysine N-methyltransferase set-18 of Caenorhabditis elegans.